The sequence spans 127 residues: Profilin (127 aa).

Belongs to the profilin family. In terms of assembly, occurs in many kinds of cells as a complex with monomeric actin in a 1:1 ratio.

It is found in the cytoplasm. Its subcellular location is the cytoskeleton. Binds to actin and affects the structure of the cytoskeleton. At high concentrations, profilin prevents the polymerization of actin, whereas it enhances it at low concentrations. By binding to PIP2, it inhibits the formation of IP3 and DG. In S.pombe, it is essential for cytokinesis. In Schizosaccharomyces pombe (strain 972 / ATCC 24843) (Fission yeast), this protein is Profilin (cdc3).